A 475-amino-acid chain; its full sequence is F-box protein SKIP22 (475 aa).

The tract at residues Asp114–Gly133 is disordered. Positions Pro319 to Lys365 constitute an F-box domain.

In terms of assembly, part of a SCF (ASK-cullin-F-box) protein ligase complex. Interacts with SKP1A/ASK1 and SPK1B/ASK2.

It localises to the nucleus. The protein operates within protein modification; protein ubiquitination. Functionally, component of SCF(ASK-cullin-F-box) E3 ubiquitin ligase complexes, which may mediate the ubiquitination and subsequent proteasomal degradation of target proteins. The protein is F-box protein SKIP22 (SKIP22) of Arabidopsis thaliana (Mouse-ear cress).